We begin with the raw amino-acid sequence, 602 residues long: Elongation factor 4 (602 aa).

A tr-type G domain is found at 7-189 (SRLRNFCIIA…AVVERVPPPK (183 aa)). GTP-binding positions include 19-24 (DHGKST) and 136-139 (NKVD).

It belongs to the TRAFAC class translation factor GTPase superfamily. Classic translation factor GTPase family. LepA subfamily.

The protein resides in the cell inner membrane. The catalysed reaction is GTP + H2O = GDP + phosphate + H(+). Required for accurate and efficient protein synthesis under certain stress conditions. May act as a fidelity factor of the translation reaction, by catalyzing a one-codon backward translocation of tRNAs on improperly translocated ribosomes. Back-translocation proceeds from a post-translocation (POST) complex to a pre-translocation (PRE) complex, thus giving elongation factor G a second chance to translocate the tRNAs correctly. Binds to ribosomes in a GTP-dependent manner. In Prochlorococcus marinus (strain MIT 9211), this protein is Elongation factor 4.